A 144-amino-acid chain; its full sequence is D-aminoacyl-tRNA deacylase (144 aa).

Residues 136–137 carry the Gly-cisPro motif, important for rejection of L-amino acids motif; it reads GP.

The protein belongs to the DTD family. As to quaternary structure, homodimer.

It is found in the cytoplasm. The enzyme catalyses glycyl-tRNA(Ala) + H2O = tRNA(Ala) + glycine + H(+). It catalyses the reaction a D-aminoacyl-tRNA + H2O = a tRNA + a D-alpha-amino acid + H(+). In terms of biological role, an aminoacyl-tRNA editing enzyme that deacylates mischarged D-aminoacyl-tRNAs. Also deacylates mischarged glycyl-tRNA(Ala), protecting cells against glycine mischarging by AlaRS. Acts via tRNA-based rather than protein-based catalysis; rejects L-amino acids rather than detecting D-amino acids in the active site. By recycling D-aminoacyl-tRNA to D-amino acids and free tRNA molecules, this enzyme counteracts the toxicity associated with the formation of D-aminoacyl-tRNA entities in vivo and helps enforce protein L-homochirality. In Actinobacillus pleuropneumoniae serotype 5b (strain L20), this protein is D-aminoacyl-tRNA deacylase.